Consider the following 771-residue polypeptide: Ribonucleoside-diphosphate reductase large subunit (771 aa).

Positions 1-92 constitute an ATP-cone domain; the sequence is MFVIKRNGYK…VSNLHKETKK (92 aa). Residues 5 to 6, 11 to 17, Thr53, Asp57, and Lys88 contribute to the ATP site; these read KR and ENVMFDK. Residues Ser202 and Ser217 each contribute to the GDP site. DTTP-binding positions include 226–228, Lys243, and Arg256; that span reads DSI. Asn427 is a binding site for GDP. Asn427 (proton acceptor) is an active-site residue. Cys429 functions as the Cysteine radical intermediate in the catalytic mechanism. GDP-binding positions include Glu431 and 603–606; that span reads TAST. The active-site Proton acceptor is Glu431.

This sequence belongs to the ribonucleoside diphosphate reductase large chain family. Interacts with RNR2/OPG047 subunit. Mg(2+) serves as cofactor.

It carries out the reaction a 2'-deoxyribonucleoside 5'-diphosphate + [thioredoxin]-disulfide + H2O = a ribonucleoside 5'-diphosphate + [thioredoxin]-dithiol. Its function is as follows. Ribonucleoside-diphosphate reductase holoenzyme provides the precursors necessary for viral DNA synthesis. Allows virus growth in non-dividing cells. Catalyzes the biosynthesis of deoxyribonucleotides from the corresponding ribonucleotides. The polypeptide is Ribonucleoside-diphosphate reductase large subunit (OPG080) (Homo sapiens (Human)).